Reading from the N-terminus, the 232-residue chain is 5'-methylthioadenosine/S-adenosylhomocysteine nucleosidase (232 aa).

Glu12 functions as the Proton acceptor in the catalytic mechanism. Substrate contacts are provided by residues Gly78, Ile152, and 173–174 (ME). Asp197 (proton donor) is an active-site residue.

The protein belongs to the PNP/UDP phosphorylase family. MtnN subfamily. In terms of assembly, homodimer.

It carries out the reaction S-adenosyl-L-homocysteine + H2O = S-(5-deoxy-D-ribos-5-yl)-L-homocysteine + adenine. It catalyses the reaction S-methyl-5'-thioadenosine + H2O = 5-(methylsulfanyl)-D-ribose + adenine. The enzyme catalyses 5'-deoxyadenosine + H2O = 5-deoxy-D-ribose + adenine. It participates in amino-acid biosynthesis; L-methionine biosynthesis via salvage pathway; S-methyl-5-thio-alpha-D-ribose 1-phosphate from S-methyl-5'-thioadenosine (hydrolase route): step 1/2. Functionally, catalyzes the irreversible cleavage of the glycosidic bond in both 5'-methylthioadenosine (MTA) and S-adenosylhomocysteine (SAH/AdoHcy) to adenine and the corresponding thioribose, 5'-methylthioribose and S-ribosylhomocysteine, respectively. Also cleaves 5'-deoxyadenosine, a toxic by-product of radical S-adenosylmethionine (SAM) enzymes, into 5-deoxyribose and adenine. Thus, is required for in vivo function of the radical SAM enzymes biotin synthase and lipoic acid synthase, that are inhibited by 5'-deoxyadenosine accumulation. This is 5'-methylthioadenosine/S-adenosylhomocysteine nucleosidase from Edwardsiella ictaluri (strain 93-146).